The primary structure comprises 117 residues: MSLSSPGVHLFYHSRWQGTRVLDELCWGLEEQGVPCRAICCDDHDCALALGKLAAKSSTLRVGLGLNATGDIALTHAQLPEDRALVCGHTRAGTAQIRTLGANAGQLVKVLPFSEIK.

Glutamate 31 is a Mg(2+) binding site.

It belongs to the DdrB/PduH family. In terms of assembly, member of the GDR complex, probably composed of DhaF(2)/DhaG(2). Mg(2+) serves as cofactor.

Functionally, small subunit of the glycerol dehydratase-reactivating factor (GDR), which reactivates suicidally inhibited adenosylcobalamin-dependent glycerol dehydratase. This chain is Probable glycerol dehydratase-reactivating factor small subunit, found in Citrobacter freundii.